The following is a 432-amino-acid chain: Glutamate-1-semialdehyde 2,1-aminomutase (432 aa).

Residue lysine 267 is modified to N6-(pyridoxal phosphate)lysine.

It belongs to the class-III pyridoxal-phosphate-dependent aminotransferase family. HemL subfamily. Homodimer. It depends on pyridoxal 5'-phosphate as a cofactor.

Its subcellular location is the cytoplasm. The enzyme catalyses (S)-4-amino-5-oxopentanoate = 5-aminolevulinate. Its pathway is porphyrin-containing compound metabolism; protoporphyrin-IX biosynthesis; 5-aminolevulinate from L-glutamyl-tRNA(Glu): step 2/2. This is Glutamate-1-semialdehyde 2,1-aminomutase from Syntrophus aciditrophicus (strain SB).